Consider the following 454-residue polypeptide: Innexin-19 (454 aa).

Topologically, residues 1–48 are cytoplasmic; the sequence is MWRTPASTGPLRQDRQMFFHATLARSFINALSVRGDDDAVDRLNYYYT. The chain crosses the membrane as a helical span at residues 49-69; sequence PLILAVCCLVISAKQYGGTPI. Residues 70–118 are Extracellular-facing; that stretch reads ECWVNPHSRESMEEYIESYCWIQNTYWIPMYENVPDDHTAREEKQIGYY. Residues 119–139 form a helical membrane-spanning segment; that stretch reads QWVPFILIAEALMFSLPCIFW. The Cytoplasmic segment spans residues 140-214; sequence RLCSFQSGLN…SRFLSGQCLS (75 aa). A helical membrane pass occupies residues 215–235; the sequence is ILHSFTKLLYSMNVVAQFLIL. At 236–300 the chain is on the extracellular side; the sequence is NACLKSSDFL…ALLINIINEK (65 aa). The chain crosses the membrane as a helical span at residues 301 to 321; that stretch reads VFAFLWCWYMILAIITTCSFI. Over 322 to 454 the chain is Cytoplasmic; it reads YWIANSFIHS…SNPGQTKSFL (133 aa).

Belongs to the pannexin family. In terms of tissue distribution, specifically expressed in sensory neurons and interneurons in the head and tail. Expressed in neurons AWC, ASH, AFD, ASI, ADL, ASK, BAG, AWB, and ADF (head sensory neurons); ADA, AIZ, RIC, AIY, and AIM (head interneurons); PHA and PHB (tail sensory neurons); and PVC and PVQ (tail interneurons).

The protein resides in the cell membrane. The protein localises to the cell junction. It localises to the gap junction. Its function is as follows. Structural component of the gap junctions that specifically coordinates left-right asymmetry in the developing nervous system. Acts by forming gap junction network linking embryonic neurons and providing electrical coupling between cells, leading to promote or inhibit AWC signaling. Required for the left and right AWC olfactory neurons to establish asymmetric patterns of gene expression during embryogenesis. Acts autonomously. The polypeptide is Innexin-19 (inx-19) (Caenorhabditis elegans).